The primary structure comprises 250 residues: Flavin-dependent thymidylate synthase (250 aa).

In terms of domain architecture, ThyX spans 7 to 233 (LRVQLIAKTE…PQVFSDFEIT (227 aa)). FAD-binding positions include S71, 95-97 (RHR), and Q103. DUMP-binding positions include 92-95 (ELIR), 103-107 (QLSQR), and R172. The short motif at 95-105 (RHRHFSYSQLS) is the ThyX motif element. FAD-binding positions include 188 to 190 (NYR) and H194. R199 serves as a coordination point for dUMP. Residue R199 is the Involved in ionization of N3 of dUMP, leading to its activation of the active site.

The protein belongs to the thymidylate synthase ThyX family. Homotetramer. The cofactor is FAD.

The enzyme catalyses dUMP + (6R)-5,10-methylene-5,6,7,8-tetrahydrofolate + NADPH + H(+) = dTMP + (6S)-5,6,7,8-tetrahydrofolate + NADP(+). Its pathway is pyrimidine metabolism; dTTP biosynthesis. In terms of biological role, catalyzes the reductive methylation of 2'-deoxyuridine-5'-monophosphate (dUMP) to 2'-deoxythymidine-5'-monophosphate (dTMP) while utilizing 5,10-methylenetetrahydrofolate (mTHF) as the methyl donor, and NADPH and FADH(2) as the reductant. This chain is Flavin-dependent thymidylate synthase, found in Mycolicibacterium gilvum (strain PYR-GCK) (Mycobacterium gilvum (strain PYR-GCK)).